Consider the following 595-residue polypeptide: Protein UL31 (595 aa).

The first 23 residues, 1–23 (MGDKPTLVTLLTVAVSSPPPSSP), serve as a signal peptide directing secretion. The tract at residues 47 to 94 (TATSEVGEKTAEQEVAAADPETGNERRENRENEGGETRTTGTTAVKRS) is disordered. The span at 69 to 82 (GNERRENRENEGGE) shows a compositional bias: basic and acidic residues. N-linked (GlcNAc...) asparagine; by host glycans are attached at residues N176 and N197.

It belongs to the herpesviridae U10 family. As to quaternary structure, interacts with host CGAS.

The protein resides in the host cytoplasm. It is found in the host nucleus. Plays a role in the inhibition of host innate immune system by targeting host CGAS and promoting dissociation of DNA from CGAS, thereby inhibiting the enzymatic activity of CGAS. This chain is Protein UL31, found in Homo sapiens (Human).